The primary structure comprises 505 residues: Maturase K (505 aa).

This sequence belongs to the intron maturase 2 family. MatK subfamily.

The protein resides in the plastid. It localises to the chloroplast. Usually encoded in the trnK tRNA gene intron. Probably assists in splicing its own and other chloroplast group II introns. In Portulacaria afra (Elephant's food), this protein is Maturase K.